Consider the following 449-residue polypeptide: Phosphomethylpyrimidine synthase (449 aa).

Substrate-binding positions include Asn-80, Met-109, Tyr-138, His-173, 193 to 195 (SRG), 234 to 237 (DSLR), and Glu-273. His-277 provides a ligand contact to Zn(2+). A substrate-binding site is contributed by Tyr-300. His-341 lines the Zn(2+) pocket. [4Fe-4S] cluster contacts are provided by Cys-421, Cys-424, and Cys-429.

The protein belongs to the ThiC family. As to quaternary structure, homodimer. Requires [4Fe-4S] cluster as cofactor.

The catalysed reaction is 5-amino-1-(5-phospho-beta-D-ribosyl)imidazole + S-adenosyl-L-methionine = 4-amino-2-methyl-5-(phosphooxymethyl)pyrimidine + CO + 5'-deoxyadenosine + formate + L-methionine + 3 H(+). It participates in cofactor biosynthesis; thiamine diphosphate biosynthesis. In terms of biological role, catalyzes the synthesis of the hydroxymethylpyrimidine phosphate (HMP-P) moiety of thiamine from aminoimidazole ribotide (AIR) in a radical S-adenosyl-L-methionine (SAM)-dependent reaction. The polypeptide is Phosphomethylpyrimidine synthase (Campylobacter hominis (strain ATCC BAA-381 / DSM 21671 / CCUG 45161 / LMG 19568 / NCTC 13146 / CH001A)).